The following is a 476-amino-acid chain: Thymidine phosphorylase (476 aa).

The segment covering 1–11 (MAAPGTPPPLA) has biased composition (pro residues). Residues 1–26 (MAAPGTPPPLAPETAGADSGGGSGEH) form a disordered region. A phosphothreonine mark is found at Thr6 and Thr475.

It belongs to the thymidine/pyrimidine-nucleoside phosphorylase family. In terms of assembly, homodimer.

It carries out the reaction thymidine + phosphate = 2-deoxy-alpha-D-ribose 1-phosphate + thymine. Its pathway is pyrimidine metabolism; dTMP biosynthesis via salvage pathway; dTMP from thymine: step 1/2. In terms of biological role, catalyzes the reversible phosphorolysis of thymidine. The produced molecules are then utilized as carbon and energy sources or in the rescue of pyrimidine bases for nucleotide synthesis. The chain is Thymidine phosphorylase (Tymp) from Rattus norvegicus (Rat).